Reading from the N-terminus, the 237-residue chain is DEAIHCPPCSEEKLARCRPPVGCEELVREPGCGCCATCALGKGMPCGVYTPDCGSGLRCHPPRGVEKPLHTLVHGQGVCMELAEIEAIQESLQPSDKDEGDHPNNSFSPCSAHDRKCLQKHLAKIRDRSTSGGKMKVIGAPREEVRPVPQGSCQSELHRALERLAASQSRTHEDLYIIPIPNCDRNGNFHPKQCHPALDGQRGKCWCVDRKTGVKLPGGLEPKGELDCHQLADSFRE.

The IGFBP N-terminal domain maps to 2–82; sequence EAIHCPPCSE…VHGQGVCMEL (81 aa). Intrachain disulfides connect C6-C32, C9-C34, C17-C35, C23-C38, C46-C59, and C53-C79. N-linked (GlcNAc...) asparagine glycosylation occurs at N104. Intrachain disulfides connect C110/C117, C153/C183, C194/C205, and C207/C228. The region spanning 150–228 is the Thyroglobulin type-1 domain; it reads QGSCQSELHR…GLEPKGELDC (79 aa). Residue S234 is modified to Phosphoserine.

As to quaternary structure, binds IGF2 more than IGF1. Post-translationally, there are two different molecular mass variants (29 kDa and 24 kDa forms). The 29 kDa form was shown to be N-glycosylated. Detected in adult ewe, liver &gt; kidney &gt; lung &gt;&gt; heart and also in several fetal tissues.

Its subcellular location is the secreted. Its function is as follows. IGF-binding proteins prolong the half-life of the IGFs and have been shown to either inhibit or stimulate the growth promoting effects of the IGFs on cell culture. They alter the interaction of IGFs with their cell surface receptors. This chain is Insulin-like growth factor-binding protein 4 (IGFBP4), found in Ovis aries (Sheep).